Here is a 2360-residue protein sequence, read N- to C-terminus: Protein Ycf2 (2360 aa).

3 disordered regions span residues Ser-172–Asp-193, Thr-225–Asn-255, and Lys-944–Glu-995. Residues Lys-234–Arg-244 are compositionally biased toward low complexity. Over residues Leu-245–Asn-254 the composition is skewed to basic and acidic residues. Residues Lys-944 to Glu-959 show a composition bias toward basic residues. The segment covering Lys-960–Arg-993 has biased composition (basic and acidic residues). Residue Gly-1425–Ser-1432 coordinates ATP. Disordered regions lie at residues Tyr-1499–Gly-1518, Leu-1843–Pro-2031, and Pro-2098–Ser-2214. The span at Thr-1849–Glu-2011 shows a compositional bias: acidic residues. Positions Gly-2012–Arg-2024 are enriched in basic and acidic residues. Acidic residues-rich tracts occupy residues Pro-2098–Glu-2115 and Gly-2122–Ser-2197.

The protein belongs to the Ycf2 family.

The protein localises to the plastid. It localises to the chloroplast stroma. Probable ATPase of unknown function. Its presence in a non-photosynthetic plant (Epifagus virginiana) and experiments in tobacco indicate that it has an essential function which is probably not related to photosynthesis. The polypeptide is Protein Ycf2 (Oenothera argillicola (Appalachian evening primrose)).